Here is a 46-residue protein sequence, read N- to C-terminus: Esculentin-1GRa (46 aa).

As to expression, expressed by the skin glands.

It is found in the secreted. Functionally, antimicrobial peptide active against the Gram-positive bacterium S.aureus (MIC=12.5 uM) and against the Gram-negative bacterium E.coli (MIC=6 uM). Has no antifungal activity against C.albicans. Shows hemolytic activity against human erythrocytes only at high concentrations (LC(50)=210 uM). The polypeptide is Esculentin-1GRa (Odorrana grahami (Yunnanfu frog)).